Reading from the N-terminus, the 185-residue chain is Ribosome-recycling factor (185 aa).

The protein belongs to the RRF family.

It is found in the cytoplasm. In terms of biological role, responsible for the release of ribosomes from messenger RNA at the termination of protein biosynthesis. May increase the efficiency of translation by recycling ribosomes from one round of translation to another. The protein is Ribosome-recycling factor of Pseudomonas fluorescens (strain SBW25).